Consider the following 365-residue polypeptide: Protein SGT1 homolog (365 aa).

Position 2 is an N-acetylalanine (alanine 2). TPR repeat units lie at residues 11 to 44 (SQRF…KPDD), 45 to 78 (AQYY…NPNN), and 79 to 112 (STAM…DIET). In terms of domain architecture, CS spans 169-258 (QSKIKYDWYQ…PEAVRWEKLE (90 aa)). The residue at position 265 (threonine 265) is a Phosphothreonine. Residues 276–365 (LYPSSSPYTR…PPDDMEWKKY (90 aa)) enclose the SGS domain. Phosphoserine is present on serine 281. At threonine 284 the chain carries Phosphothreonine. A Glycyl lysine isopeptide (Lys-Gly) (interchain with G-Cter in SUMO1); alternate cross-link involves residue lysine 295. Lysine 295 participates in a covalent cross-link: Glycyl lysine isopeptide (Lys-Gly) (interchain with G-Cter in SUMO2); alternate. Serine 331 is modified (phosphoserine).

It belongs to the SGT1 family. In terms of assembly, probably associates with SCF (SKP1-CUL1-F-box protein) complex through interaction with SKP1. Interacts with S100A6. Interacts with HSP90. Post-translationally, phosphorylated at Ser-281 and Ser-331, dephosphorylation promotes nuclear translocation, most likely due to disruption of the SUGT1-HSP90 complex.

It localises to the cytoplasm. It is found in the nucleus. In terms of biological role, may play a role in ubiquitination and subsequent proteasomal degradation of target proteins. The polypeptide is Protein SGT1 homolog (Homo sapiens (Human)).